Reading from the N-terminus, the 1244-residue chain is Ras-specific guanine nucleotide-releasing factor 2 (1244 aa).

One can recognise a PH 1 domain in the interval 22-129; that stretch reads EGTKRGYLSK…WVEAIQQASY (108 aa). Residues 147–189 are a coiled coil; sequence VQIVETEKVAANQLRTQLEDQDTEIERLKAEIIALNKTKERMR. The IQ domain occupies 201–230; the sequence is DIKKIKKVQSFMRGWLCRRKWKIIVQDYIC. The 187-residue stretch at 239–425 folds into the DH domain; sequence KRNQIVFNMV…EELSRVMHDE (187 aa). The 119-residue stretch at 466–584 folds into the PH 2 domain; that stretch reads PSVERGKLSK…WTSDISQCID (119 aa). An N-terminal Ras-GEF domain is found at 631–745; it reads KVPQIRYASV…PVRTRKLSLN (115 aa). 3 disordered regions span residues 704-743, 759-814, and 843-879; these read NRSG…RKLS, TTSS…NAEV, and PESP…AENS. A compositionally biased stretch (basic and acidic residues) spans 706–715; that stretch reads SGDHVNDKSP. The segment covering 728 to 743 has biased composition (polar residues); that stretch reads SISSRTSSPVRTRKLS. Low complexity-rich tracts occupy residues 759 to 774 and 781 to 806; these read TTSS…ANPT and NNNN…QSPG. Residues 1009–1241 form the Ras-GEF domain; sequence SAMEIAEQIT…YDLSLKIEPR (233 aa).

The protein localises to the cytoplasm. The protein resides in the cell membrane. It is found in the endoplasmic reticulum membrane. Functionally, functions as a calcium-regulated nucleotide exchange factor activating both Ras and rac1 through the exchange of bound GDP for GTP. May function in synaptic plasticity. This chain is Ras-specific guanine nucleotide-releasing factor 2 (rasgrf2), found in Danio rerio (Zebrafish).